A 371-amino-acid polypeptide reads, in one-letter code: 3-dehydroquinate synthase (371 aa).

Residues 70–75, 104–108, 128–129, K141, and K150 each bind NAD(+); these read DAEDGK, GAVTD, and TT. Residues E183, H246, and H262 each contribute to the Zn(2+) site.

The protein belongs to the sugar phosphate cyclases superfamily. Dehydroquinate synthase family. Co(2+) serves as cofactor. Zn(2+) is required as a cofactor. Requires NAD(+) as cofactor.

It localises to the cytoplasm. The enzyme catalyses 7-phospho-2-dehydro-3-deoxy-D-arabino-heptonate = 3-dehydroquinate + phosphate. Its pathway is metabolic intermediate biosynthesis; chorismate biosynthesis; chorismate from D-erythrose 4-phosphate and phosphoenolpyruvate: step 2/7. Its function is as follows. Catalyzes the conversion of 3-deoxy-D-arabino-heptulosonate 7-phosphate (DAHP) to dehydroquinate (DHQ). In Saccharopolyspora erythraea (strain ATCC 11635 / DSM 40517 / JCM 4748 / NBRC 13426 / NCIMB 8594 / NRRL 2338), this protein is 3-dehydroquinate synthase.